Here is a 73-residue protein sequence, read N- to C-terminus: UPF0154 protein MYCGA5700 (73 aa).

Residues 5–25 (LALGLSIPLCLIVGAFVGYFV) form a helical membrane-spanning segment.

This sequence belongs to the UPF0154 family.

The protein localises to the membrane. This is UPF0154 protein MYCGA5700 from Mycoplasmoides gallisepticum (strain R(low / passage 15 / clone 2)) (Mycoplasma gallisepticum).